Consider the following 183-residue polypeptide: Peptidyl-tRNA hydrolase (183 aa).

Tyr14 serves as a coordination point for tRNA. His19 (proton acceptor) is an active-site residue. Tyr64, Asn66, and Asn112 together coordinate tRNA.

The protein belongs to the PTH family. In terms of assembly, monomer.

It localises to the cytoplasm. It carries out the reaction an N-acyl-L-alpha-aminoacyl-tRNA + H2O = an N-acyl-L-amino acid + a tRNA + H(+). Hydrolyzes ribosome-free peptidyl-tRNAs (with 1 or more amino acids incorporated), which drop off the ribosome during protein synthesis, or as a result of ribosome stalling. Functionally, catalyzes the release of premature peptidyl moieties from peptidyl-tRNA molecules trapped in stalled 50S ribosomal subunits, and thus maintains levels of free tRNAs and 50S ribosomes. The polypeptide is Peptidyl-tRNA hydrolase (Anaplasma phagocytophilum (strain HZ)).